Here is a 703-residue protein sequence, read N- to C-terminus: Elongation factor G 1 (703 aa).

The tr-type G domain maps to 8–290 (ERYRNIGISA…AVIDFLPSPV (283 aa)). GTP-binding positions include 17–24 (AHIDAGKT), 88–92 (DTPGH), and 142–145 (NKMD).

Belongs to the TRAFAC class translation factor GTPase superfamily. Classic translation factor GTPase family. EF-G/EF-2 subfamily.

The protein resides in the cytoplasm. Functionally, catalyzes the GTP-dependent ribosomal translocation step during translation elongation. During this step, the ribosome changes from the pre-translocational (PRE) to the post-translocational (POST) state as the newly formed A-site-bound peptidyl-tRNA and P-site-bound deacylated tRNA move to the P and E sites, respectively. Catalyzes the coordinated movement of the two tRNA molecules, the mRNA and conformational changes in the ribosome. The chain is Elongation factor G 1 from Ralstonia nicotianae (strain ATCC BAA-1114 / GMI1000) (Ralstonia solanacearum).